We begin with the raw amino-acid sequence, 441 residues long: Lysine histidine transporter-like 2 (441 aa).

Topologically, residues 1-32 (MEKSQSSPTKDASTKQKNVDDWLPITSSRNAK) are cytoplasmic. The helical transmembrane segment at 33–53 (WWYSAFHNVTAMVGAGVLSLP) threads the bilayer. Residues 54–58 (YAMSN) lie on the Extracellular side of the membrane. The chain crosses the membrane as a helical span at residues 59-79 (LGWGPGVTIMIMSWLITFYTL). Residues 80–110 (WQMVQMHEMVPGKRFDRYHELGQHAFGEKLG) are Cytoplasmic-facing. Residues 111 to 131 (LWIVVPQQLIVEVGVDIVYMV) form a helical membrane-spanning segment. Topologically, residues 132 to 155 (TGGKSLKKIHDLLCTDCKNIRTTY) are extracellular. 2 helical membrane-spanning segments follow: residues 156–176 (WIMIFASIHFVLAHLPNFNSI) and 177–197 (SIVSLAAAVMSLSYSTIAWAT). Over 198-222 (SVKKGVHPNVDYSSRASTTSGNVFN) the chain is Extracellular. A helical transmembrane segment spans residues 223–243 (FLNALGDVAFAYAGHNVVLEI). At 244 to 264 (QATIPSTPEKPSKIAMWKGVV) the chain is on the cytoplasmic side. The helical transmembrane segment at 265–285 (VAYIVVAICYFPVAFVCYYIF) threads the bilayer. The Extracellular portion of the chain corresponds to 286-300 (GNSVDDNILMTLEKP). A helical transmembrane segment spans residues 301 to 321 (IWLIAIANAFVVVHVIGSYQI). Over 322-347 (YAMPVFDMLETFLVKKMMFAPSFKLR) the chain is Cytoplasmic. The helical transmembrane segment at 348–370 (FITRTLYVAFTMFVAICIPFFGG) threads the bilayer. At 371 to 373 (LLG) the chain is on the extracellular side. A helical membrane pass occupies residues 374–396 (FFGGFAFAPTTYYLPCIMWLCIK). Over 397–406 (KPKKYGLSWC) the chain is Cytoplasmic. A helical membrane pass occupies residues 407–427 (INWFCIVVGVILTILAPIGGL). The Extracellular segment spans residues 428-441 (RTIIISAKNYEFFS).

It belongs to the amino acid/polyamine transporter 2 family. Amino acid/auxin permease (AAAP) (TC 2.A.18.2) subfamily.

It localises to the cell membrane. Amino acid transporter. This chain is Lysine histidine transporter-like 2, found in Arabidopsis thaliana (Mouse-ear cress).